A 428-amino-acid polypeptide reads, in one-letter code: Serine--tRNA ligase (428 aa).

235–237 lines the L-serine pocket; that stretch reads TAE. ATP is bound at residue 266-268; it reads RSE. Position 289 (E289) interacts with L-serine. 353 to 356 is an ATP binding site; the sequence is EISS. S389 lines the L-serine pocket.

It belongs to the class-II aminoacyl-tRNA synthetase family. Type-1 seryl-tRNA synthetase subfamily. Homodimer. The tRNA molecule binds across the dimer.

Its subcellular location is the cytoplasm. The enzyme catalyses tRNA(Ser) + L-serine + ATP = L-seryl-tRNA(Ser) + AMP + diphosphate + H(+). The catalysed reaction is tRNA(Sec) + L-serine + ATP = L-seryl-tRNA(Sec) + AMP + diphosphate + H(+). It functions in the pathway aminoacyl-tRNA biosynthesis; selenocysteinyl-tRNA(Sec) biosynthesis; L-seryl-tRNA(Sec) from L-serine and tRNA(Sec): step 1/1. Functionally, catalyzes the attachment of serine to tRNA(Ser). Is also able to aminoacylate tRNA(Sec) with serine, to form the misacylated tRNA L-seryl-tRNA(Sec), which will be further converted into selenocysteinyl-tRNA(Sec). This Shewanella sp. (strain ANA-3) protein is Serine--tRNA ligase.